The chain runs to 369 residues: 4-hydroxy-3-methylbut-2-en-1-yl diphosphate synthase (flavodoxin) (369 aa).

Positions 270, 273, 305, and 312 each coordinate [4Fe-4S] cluster.

This sequence belongs to the IspG family. [4Fe-4S] cluster is required as a cofactor.

The enzyme catalyses (2E)-4-hydroxy-3-methylbut-2-enyl diphosphate + oxidized [flavodoxin] + H2O + 2 H(+) = 2-C-methyl-D-erythritol 2,4-cyclic diphosphate + reduced [flavodoxin]. It functions in the pathway isoprenoid biosynthesis; isopentenyl diphosphate biosynthesis via DXP pathway; isopentenyl diphosphate from 1-deoxy-D-xylulose 5-phosphate: step 5/6. Converts 2C-methyl-D-erythritol 2,4-cyclodiphosphate (ME-2,4cPP) into 1-hydroxy-2-methyl-2-(E)-butenyl 4-diphosphate. The polypeptide is 4-hydroxy-3-methylbut-2-en-1-yl diphosphate synthase (flavodoxin) (Psychromonas ingrahamii (strain DSM 17664 / CCUG 51855 / 37)).